We begin with the raw amino-acid sequence, 187 residues long: Lipoprotein signal peptidase (187 aa).

3 helical membrane passes run 12–32 (VAVFACIAIAAIAIDQLTKMW), 68–88 (MTWLISLLAMAACVALVVLAV), and 91–111 (ISMKWTVLFAFAFAGAFGNLI). Catalysis depends on residues D127 and D140. Residues 141–161 (IFLMLAGVAAVLLLFLGEPFS) traverse the membrane as a helical segment. Residues 167 to 187 (EANGKTLGDDANATDDGAKAA) are disordered.

The protein belongs to the peptidase A8 family.

Its subcellular location is the cell membrane. It catalyses the reaction Release of signal peptides from bacterial membrane prolipoproteins. Hydrolyzes -Xaa-Yaa-Zaa-|-(S,diacylglyceryl)Cys-, in which Xaa is hydrophobic (preferably Leu), and Yaa (Ala or Ser) and Zaa (Gly or Ala) have small, neutral side chains.. It functions in the pathway protein modification; lipoprotein biosynthesis (signal peptide cleavage). Its function is as follows. This protein specifically catalyzes the removal of signal peptides from prolipoproteins. The polypeptide is Lipoprotein signal peptidase (Bifidobacterium adolescentis (strain ATCC 15703 / DSM 20083 / NCTC 11814 / E194a)).